The primary structure comprises 115 residues: Promotilin (115 aa).

Residues 1–25 (MVSRKAVAALLVVHVAAMLASQTEA) form the signal peptide. The segment at 39 to 72 (QEKERNKGQKKSLSVWQRSGEEGPVDPAEPIREE) is disordered.

Belongs to the motilin family.

Its subcellular location is the secreted. In terms of biological role, plays an important role in the regulation of interdigestive gastrointestinal motility and indirectly causes rhythmic contraction of duodenal and colonic smooth muscle. In Homo sapiens (Human), this protein is Promotilin (MLN).